The following is a 186-amino-acid chain: MKTAHEIRPGNVIMLDGSPWVVQKTETTRSGRNAAIVKLKLKNLLLNSGTETTFKGEDKLEDIVLDRLDCTYSYFADPMYVFMDAEYNQYDVEAENLGDAAAYIVDGMEETCQVTFYDGKAISVEMPTTIVREVIYTEPSARGDTSGKVMKPATITGGGTVSVADFVKVGDKIEIDTRTGEFKKRV.

This sequence belongs to the elongation factor P family.

The protein resides in the cytoplasm. It participates in protein biosynthesis; polypeptide chain elongation. Involved in peptide bond synthesis. Stimulates efficient translation and peptide-bond synthesis on native or reconstituted 70S ribosomes in vitro. Probably functions indirectly by altering the affinity of the ribosome for aminoacyl-tRNA, thus increasing their reactivity as acceptors for peptidyl transferase. This Shewanella sp. (strain W3-18-1) protein is Elongation factor P.